A 327-amino-acid polypeptide reads, in one-letter code: tRNA(Ile)-lysidine synthase (327 aa).

Position 32 to 37 (32 to 37 (SGGQDS)) interacts with ATP.

It belongs to the tRNA(Ile)-lysidine synthase family.

It localises to the cytoplasm. The enzyme catalyses cytidine(34) in tRNA(Ile2) + L-lysine + ATP = lysidine(34) in tRNA(Ile2) + AMP + diphosphate + H(+). Functionally, ligates lysine onto the cytidine present at position 34 of the AUA codon-specific tRNA(Ile) that contains the anticodon CAU, in an ATP-dependent manner. Cytidine is converted to lysidine, thus changing the amino acid specificity of the tRNA from methionine to isoleucine. The protein is tRNA(Ile)-lysidine synthase of Synechococcus sp. (strain JA-2-3B'a(2-13)) (Cyanobacteria bacterium Yellowstone B-Prime).